Here is a 195-residue protein sequence, read N- to C-terminus: ATP-dependent Clp protease proteolytic subunit (195 aa).

S99 acts as the Nucleophile in catalysis. H124 is a catalytic residue.

Belongs to the peptidase S14 family. As to quaternary structure, fourteen ClpP subunits assemble into 2 heptameric rings which stack back to back to give a disk-like structure with a central cavity, resembling the structure of eukaryotic proteasomes.

Its subcellular location is the cytoplasm. The catalysed reaction is Hydrolysis of proteins to small peptides in the presence of ATP and magnesium. alpha-casein is the usual test substrate. In the absence of ATP, only oligopeptides shorter than five residues are hydrolyzed (such as succinyl-Leu-Tyr-|-NHMec, and Leu-Tyr-Leu-|-Tyr-Trp, in which cleavage of the -Tyr-|-Leu- and -Tyr-|-Trp bonds also occurs).. Functionally, cleaves peptides in various proteins in a process that requires ATP hydrolysis. Has a chymotrypsin-like activity. Plays a major role in the degradation of misfolded proteins. The polypeptide is ATP-dependent Clp protease proteolytic subunit (Caldicellulosiruptor saccharolyticus (strain ATCC 43494 / DSM 8903 / Tp8T 6331)).